Here is a 181-residue protein sequence, read N- to C-terminus: Inner membrane-spanning protein YciB (181 aa).

5 helical membrane passes run 22 to 42 (IYTATGALIAATAVQIAILYF), 50 to 70 (MHLVTFAMVTVFGTLTLAFHD), 72 to 92 (AFIKWKVTIIYSLFAIALAVS), 118 to 138 (VTWYWALFFIGCGVLNVYVAF), and 148 to 168 (FKVFGLTALTLLNTVISVFYI).

This sequence belongs to the YciB family.

The protein localises to the cell inner membrane. Plays a role in cell envelope biogenesis, maintenance of cell envelope integrity and membrane homeostasis. The chain is Inner membrane-spanning protein YciB from Shewanella denitrificans (strain OS217 / ATCC BAA-1090 / DSM 15013).